The following is a 234-amino-acid chain: Cyclo(L-leucyl-L-leucyl) synthase (234 aa).

S33 functions as the Nucleophile in the catalytic mechanism. Substrate-binding positions include N36, 179 to 183 (YIFAE), Y203, and 208 to 209 (SI).

The protein belongs to the CDPS family.

The enzyme catalyses 2 L-leucyl-tRNA(Leu) = cyclo(L-leucyl-L-leucyl) + 2 tRNA(Leu) + 2 H(+). Functionally, it uses activated amino acids in the form of aminoacyl-tRNAs (aa-tRNAs) as substrates to catalyze the ATP-independent formation of cyclodipeptides which are intermediates in diketopiperazine (DKP) biosynthetic pathways. Catalyzes the formation of cyclo(L-Leu-L-Leu) (cLL) from L-leucyl-tRNA(Leu). Can incorporate various nonpolar residues, such as L-phenylalanine, L-leucine and L-methionine, into cyclodipeptides. The polypeptide is Cyclo(L-leucyl-L-leucyl) synthase (Photorhabdus laumondii subsp. laumondii (strain DSM 15139 / CIP 105565 / TT01) (Photorhabdus luminescens subsp. laumondii)).